A 674-amino-acid chain; its full sequence is DNA ligase (674 aa).

NAD(+)-binding positions include Asp35–Asp39, Ser82–Leu83, and Glu116. Lys118 serves as the catalytic N6-AMP-lysine intermediate. Residues Arg139, Glu174, Lys282, and Lys306 each contribute to the NAD(+) site. Zn(2+) is bound by residues Cys400, Cys403, Cys418, and Cys424. One can recognise a BRCT domain in the interval Ser593–Val674.

The protein belongs to the NAD-dependent DNA ligase family. LigA subfamily. The cofactor is Mg(2+). Mn(2+) serves as cofactor.

The enzyme catalyses NAD(+) + (deoxyribonucleotide)n-3'-hydroxyl + 5'-phospho-(deoxyribonucleotide)m = (deoxyribonucleotide)n+m + AMP + beta-nicotinamide D-nucleotide.. DNA ligase that catalyzes the formation of phosphodiester linkages between 5'-phosphoryl and 3'-hydroxyl groups in double-stranded DNA using NAD as a coenzyme and as the energy source for the reaction. It is essential for DNA replication and repair of damaged DNA. The chain is DNA ligase from Ehrlichia ruminantium (strain Welgevonden).